A 441-amino-acid polypeptide reads, in one-letter code: Gluconate 2-dehydrogenase cytochrome c subunit (441 aa).

Positions 1 to 19 are cleaved as a signal peptide; the sequence is MMKSILALVLGTLSFAALA. 3 Cytochrome c domains span residues 26-129, 173-289, and 312-403; these read ALVK…MHGV, PVLA…KSLG, and DDSQ…RGSW. Positions 40, 43, 44, 188, 191, 192, 325, 328, and 329 each coordinate heme c.

In terms of assembly, heterotrimer. It depends on FAD as a cofactor. In terms of processing, binds 3 heme c groupd covalently per subunit.

It localises to the cell membrane. The catalysed reaction is D-gluconate + A = 2-dehydro-D-gluconate + AH2. Part of the heterotrimer that catalyzes the conversion of D-gluconate to 2-dehydro-D-gluconate. The polypeptide is Gluconate 2-dehydrogenase cytochrome c subunit (Pantoea cypripedii (Pectobacterium cypripedii)).